A 210-amino-acid polypeptide reads, in one-letter code: Small ribosomal subunit protein uS3 (210 aa).

The 69-residue stretch at 38-106 (IRQFLKKRLY…EVFININEVR (69 aa)) folds into the KH type-2 domain.

The protein belongs to the universal ribosomal protein uS3 family. As to quaternary structure, part of the 30S ribosomal subunit. Forms a tight complex with proteins S10 and S14.

Binds the lower part of the 30S subunit head. Binds mRNA in the 70S ribosome, positioning it for translation. This Trichlorobacter lovleyi (strain ATCC BAA-1151 / DSM 17278 / SZ) (Geobacter lovleyi) protein is Small ribosomal subunit protein uS3.